The chain runs to 490 residues: GTPase Der (490 aa).

2 EngA-type G domains span residues 1 to 165 and 227 to 400; these read MRIA…QIPV and LKVA…TIAT. Residues 7–14, 54–58, 117–120, 233–240, 280–284, and 345–348 contribute to the GTP site; these read GRPNVGKS, DTGGV, NKAD, GHPNVGKS, DTAGL, and NKWD. The region spanning 401 to 485 is the KH-like domain; sequence TKLSTSLVNK…PFDLEYKAKP (85 aa).

The protein belongs to the TRAFAC class TrmE-Era-EngA-EngB-Septin-like GTPase superfamily. EngA (Der) GTPase family. In terms of assembly, associates with the 50S ribosomal subunit.

GTPase that plays an essential role in the late steps of ribosome biogenesis. In Chlamydia trachomatis serovar L2b (strain UCH-1/proctitis), this protein is GTPase Der.